Consider the following 111-residue polypeptide: Nucleoid-associated protein Tmel_0542 (111 aa).

This sequence belongs to the YbaB/EbfC family. In terms of assembly, homodimer.

The protein resides in the cytoplasm. It localises to the nucleoid. In terms of biological role, binds to DNA and alters its conformation. May be involved in regulation of gene expression, nucleoid organization and DNA protection. The polypeptide is Nucleoid-associated protein Tmel_0542 (Thermosipho melanesiensis (strain DSM 12029 / CIP 104789 / BI429)).